Consider the following 150-residue polypeptide: SsrA-binding protein (150 aa).

It belongs to the SmpB family.

Its subcellular location is the cytoplasm. In terms of biological role, required for rescue of stalled ribosomes mediated by trans-translation. Binds to transfer-messenger RNA (tmRNA), required for stable association of tmRNA with ribosomes. tmRNA and SmpB together mimic tRNA shape, replacing the anticodon stem-loop with SmpB. tmRNA is encoded by the ssrA gene; the 2 termini fold to resemble tRNA(Ala) and it encodes a 'tag peptide', a short internal open reading frame. During trans-translation Ala-aminoacylated tmRNA acts like a tRNA, entering the A-site of stalled ribosomes, displacing the stalled mRNA. The ribosome then switches to translate the ORF on the tmRNA; the nascent peptide is terminated with the 'tag peptide' encoded by the tmRNA and targeted for degradation. The ribosome is freed to recommence translation, which seems to be the essential function of trans-translation. The protein is SsrA-binding protein of Borreliella burgdorferi (strain ATCC 35210 / DSM 4680 / CIP 102532 / B31) (Borrelia burgdorferi).